Reading from the N-terminus, the 305-residue chain is 5'-hydroxyaverantin dehydrogenase stcG (305 aa).

NADP(+)-binding residues include serine 25, leucine 27, glutamine 48, aspartate 68, tyrosine 186, lysine 190, and serine 221. Tyrosine 186 serves as the catalytic Proton acceptor. The Lowers pKa of active site Tyr role is filled by lysine 190.

This sequence belongs to the short-chain dehydrogenases/reductases (SDR) family.

The catalysed reaction is (1'S,5'S)-5'-hydroxyaverantin + NAD(+) = (S)-5'-oxoaverantin + NADH + H(+). The enzyme catalyses (1'S,5'R)-5'-hydroxyaverantin + NAD(+) = (S)-5'-oxoaverantin + NADH + 2 H(+). It functions in the pathway mycotoxin biosynthesis; sterigmatocystin biosynthesis. In terms of biological role, 5'-hydroxyaverantin dehydrogenase; part of the gene cluster that mediates the biosynthesis of sterigmatocystin (ST), a polyketide-derived furanocoumarin which is part of the most toxic and carcinogenic compounds among the known mycotoxins. The first step in the biosynthesis of sterigmatocystin is the production of hexanoate by the fatty acid synthase (FAS) units stcJ and stcK. The polyketide backbone is assembled by the non-reducing polyketide synthase stcA by condensation of the starter hexanoyl-CoA and 7 malonyl-CoA extender units followed by cyclization and release of norsolorinic acid. Norsolorinic acid is the first stable intermediate in the biosynthesis of sterigmatocystin and is converted into averantin (AVN) by the ketoreductase stcE which reduces the hexanoate ketone to an alcohol. Averantin is then oxidized into 5'-hydroxyaverantin (HAVN) by the cytochrome P450 monooxygenase stcF. 5'-hydroxyaverantin is further converted to 5'-oxyaverantin (OAVN) by the 5'-hydroxyaverantin dehydrogenase stcG. The next step is the conversion of OAVN into averufin (AVF) which is catalyzed by a yet to be identified enzyme. The cytochrome P450 monooxygenase stcB and the flavin-binding monooxygenase stcW are both required for the conversion of averufin to 1-hydroxyversicolorone. The esterase stcI probably catalyzes the formation of versiconal hemiacetal acetate from 1-hydroxyversicolorone. The oxydoreductase stcN then probably catalyzes the biosynthetic step from versiconal to versicolorin B (VERB). The next step is performed by the versicolorin B desaturase stcL to produce versicolorin A (VERA). The ketoreductase stcU and the cytochrome P450 monooxygenase stcS are involved in the conversion of versicolorin A to demethylsterigmatocystin. The Baeyer-Villiger oxidas stcQ and the reductase stcR might be involved in the biosynthetic step from versicolorin A to demethylsterigmatocystin. The final step in the biosynthesis of sterigmatocystin is the methylation of demethylsterigmatocystin catalyzed by the methyltransferase stcP. In Emericella nidulans (strain FGSC A4 / ATCC 38163 / CBS 112.46 / NRRL 194 / M139) (Aspergillus nidulans), this protein is 5'-hydroxyaverantin dehydrogenase stcG.